Consider the following 237-residue polypeptide: Large ribosomal subunit protein uL1 (237 aa).

This sequence belongs to the universal ribosomal protein uL1 family. Part of the 50S ribosomal subunit.

In terms of biological role, binds directly to 23S rRNA. The L1 stalk is quite mobile in the ribosome, and is involved in E site tRNA release. Functionally, protein L1 is also a translational repressor protein, it controls the translation of the L11 operon by binding to its mRNA. The sequence is that of Large ribosomal subunit protein uL1 from Synechococcus sp. (strain ATCC 27144 / PCC 6301 / SAUG 1402/1) (Anacystis nidulans).